The primary structure comprises 749 residues: MIKLILSLIFLIICCNINPSESFKLITLTTGPTSDLGFNNMVNQGRIGVSKAMNIEDSRIFIVSGRNETYALLLPLIQNDDIDLVICSSQDHGDACKEIAAMYIDSPTIKTQFLVRGSGAATKNLIQITYNYASVNYISGMFAGLQTVKNKIGFLSPGSAANNNDSFVYAFWIGAKQVNPDVKFYYYNIGSYLDQDKTIAATQDLINIYGCDVIADTLDDFSAGNVAIQNNQYAMGTNGFPQRDVYGENVIFSYAYNWTKYFLPIAGSVANGTVPGKWYADFNKEDNYNFYDLSFGFKVSQNTKDLLIQKSRVLATTPRAGHPYYCNEYIEQYTKKYNLPTQAANSSCISTAGFFYINQPVGDMIYLGSYNIRLSKIEFSSSVQKGFSIVSGCLIAFVILMMVGIVYYKDTPSIRSASPIFLNFSLIGGIIIYIGIIIWVGPISTHQCNARFWLVTLGFSTLIGSLVVKNFRIWLIFDNPELKAIKITNYQLFPWVGLCLVINIVLMAILTSVGDLKAIEAQGIDSLGKYEYMTVCKMNSAGASTLYSILAYFAALLLVGVFVSWKIRIVDIEEFNESKAIANTLYAVSFCLFVIVPLMISPQEKQSETIILCVAGLFITTAALLIVFIPKFWRVFIYGKEGTNEMFKQKKSSSVATARAESLSKNSSNGGAHSGGGAVKTNRRGNIVSGDFTDDSESSLSEPNKPTKNNDGNVNVTAGAVLAEFTDDTISEFDENEVNEEPVKTESQE.

Positions 1 to 22 (MIKLILSLIFLIICCNINPSES) are cleaved as a signal peptide. Residues 23-385 (FKLITLTTGP…KIEFSSSVQK (363 aa)) are Extracellular-facing. Residues Asn67, Asn164, Asn257, Asn271, and Asn345 are each glycosylated (N-linked (GlcNAc...) asparagine). The chain crosses the membrane as a helical span at residues 386 to 406 (GFSIVSGCLIAFVILMMVGIV). Topologically, residues 407 to 419 (YYKDTPSIRSASP) are cytoplasmic. Residues 420 to 440 (IFLNFSLIGGIIIYIGIIIWV) form a helical membrane-spanning segment. The Extracellular portion of the chain corresponds to 441–456 (GPISTHQCNARFWLVT). Residues 457 to 477 (LGFSTLIGSLVVKNFRIWLIF) form a helical membrane-spanning segment. The Cytoplasmic segment spans residues 478–492 (DNPELKAIKITNYQL). Residues 493–513 (FPWVGLCLVINIVLMAILTSV) form a helical membrane-spanning segment. The Extracellular portion of the chain corresponds to 514-544 (GDLKAIEAQGIDSLGKYEYMTVCKMNSAGAS). A helical membrane pass occupies residues 545–565 (TLYSILAYFAALLLVGVFVSW). Residues 566–579 (KIRIVDIEEFNESK) are Cytoplasmic-facing. A helical transmembrane segment spans residues 580-600 (AIANTLYAVSFCLFVIVPLMI). Residues 601-609 (SPQEKQSET) are Extracellular-facing. Residues 610-630 (IILCVAGLFITTAALLIVFIP) form a helical membrane-spanning segment. At 631-749 (KFWRVFIYGK…EEPVKTESQE (119 aa)) the chain is on the cytoplasmic side. The disordered stretch occupies residues 658-749 (ARAESLSKNS…EEPVKTESQE (92 aa)). The segment covering 698–716 (SSLSEPNKPTKNNDGNVNV) has biased composition (polar residues). A compositionally biased stretch (acidic residues) spans 725 to 740 (FTDDTISEFDENEVNE).

The protein in the N-terminal section; belongs to the BMP lipoprotein family. It in the C-terminal section; belongs to the G-protein coupled receptor 3 family. GABA-B receptor subfamily.

The protein resides in the membrane. The polypeptide is Metabotropic glutamate receptor-like protein M (grlM) (Dictyostelium discoideum (Social amoeba)).